The chain runs to 81 residues: Defensin-like protein 115 (81 aa).

A signal peptide spans 1-24; the sequence is MAITKKMLVVFLLAFLFVTSSVHC. Disulfide bonds link C40–C78, C46–C69, C54–C76, and C58–C77.

This sequence belongs to the DEFL family.

It is found in the secreted. In Arabidopsis thaliana (Mouse-ear cress), this protein is Defensin-like protein 115.